The sequence spans 379 residues: UDP-N-acetylglucosamine--N-acetylmuramyl-(pentapeptide) pyrophosphoryl-undecaprenol N-acetylglucosamine transferase (379 aa).

Residues 10–12 (TAG), Asn124, Arg161, Ser195, and Gln291 contribute to the UDP-N-acetyl-alpha-D-glucosamine site.

This sequence belongs to the glycosyltransferase 28 family. MurG subfamily.

It localises to the cell membrane. The enzyme catalyses di-trans,octa-cis-undecaprenyl diphospho-N-acetyl-alpha-D-muramoyl-L-alanyl-D-glutamyl-meso-2,6-diaminopimeloyl-D-alanyl-D-alanine + UDP-N-acetyl-alpha-D-glucosamine = di-trans,octa-cis-undecaprenyl diphospho-[N-acetyl-alpha-D-glucosaminyl-(1-&gt;4)]-N-acetyl-alpha-D-muramoyl-L-alanyl-D-glutamyl-meso-2,6-diaminopimeloyl-D-alanyl-D-alanine + UDP + H(+). It functions in the pathway cell wall biogenesis; peptidoglycan biosynthesis. Cell wall formation. Catalyzes the transfer of a GlcNAc subunit on undecaprenyl-pyrophosphoryl-MurNAc-pentapeptide (lipid intermediate I) to form undecaprenyl-pyrophosphoryl-MurNAc-(pentapeptide)GlcNAc (lipid intermediate II). The protein is UDP-N-acetylglucosamine--N-acetylmuramyl-(pentapeptide) pyrophosphoryl-undecaprenol N-acetylglucosamine transferase of Thermobifida fusca (strain YX).